The primary structure comprises 166 residues: Cyclic pyranopterin monophosphate synthase (166 aa).

Substrate contacts are provided by residues 75–77 (LCH) and 113–114 (ME). Asp-128 is a catalytic residue.

It belongs to the MoaC family. As to quaternary structure, homohexamer; trimer of dimers.

It carries out the reaction (8S)-3',8-cyclo-7,8-dihydroguanosine 5'-triphosphate = cyclic pyranopterin phosphate + diphosphate. It functions in the pathway cofactor biosynthesis; molybdopterin biosynthesis. Functionally, catalyzes the conversion of (8S)-3',8-cyclo-7,8-dihydroguanosine 5'-triphosphate to cyclic pyranopterin monophosphate (cPMP). This Thermomicrobium roseum (strain ATCC 27502 / DSM 5159 / P-2) protein is Cyclic pyranopterin monophosphate synthase.